Reading from the N-terminus, the 343-residue chain is Cysteine proteinase 1 (343 aa).

Positions 1–18 (MKVILLFVLAVFTVFVSS) are cleaved as a signal peptide. Positions 19–117 (RGIPLEEQSQ…DYLDDEFINS (99 aa)) are cleaved as a propeptide — activation peptide. 3 cysteine pairs are disulfide-bonded: Cys139/Cys190, Cys173/Cys224, and Cys279/Cys332. Residue Cys142 is part of the active site. Active-site residues include His286 and Asn311.

It belongs to the peptidase C1 family. Phosphoglycosylated, contains GlcNAc-alpha-1-P-Ser residues.

Its subcellular location is the lysosome. Its function is as follows. Cysteine proteinases 1 and 2 are believed to participate in the breakdown of protein during differentiation of Dictyostelium as a response to starvation. The protein is Cysteine proteinase 1 (cprA) of Dictyostelium discoideum (Social amoeba).